The primary structure comprises 222 residues: Probable pyridoxal 5'-phosphate synthase subunit SNO3 (222 aa).

Position 58–60 (58–60 (GES)) interacts with L-glutamine. The active-site Nucleophile is the Cys-91. L-glutamine contacts are provided by residues Arg-120 and 151–152 (IR). Catalysis depends on charge relay system residues His-197 and Glu-199.

This sequence belongs to the glutaminase PdxT/SNO family.

The enzyme catalyses aldehydo-D-ribose 5-phosphate + D-glyceraldehyde 3-phosphate + L-glutamine = pyridoxal 5'-phosphate + L-glutamate + phosphate + 3 H2O + H(+). The catalysed reaction is L-glutamine + H2O = L-glutamate + NH4(+). It participates in cofactor biosynthesis; pyridoxal 5'-phosphate biosynthesis. Catalyzes the hydrolysis of glutamine to glutamate and ammonia as part of the biosynthesis of pyridoxal 5'-phosphate. The resulting ammonia molecule is channeled to the active site of a SNZ isoform. This chain is Probable pyridoxal 5'-phosphate synthase subunit SNO3 (SNO3), found in Saccharomyces cerevisiae (strain ATCC 204508 / S288c) (Baker's yeast).